A 29-amino-acid polypeptide reads, in one-letter code: Small toxic protein ZorO (29 aa).

Residues 10 to 27 (VLIAVLELLVALLRLIDL) traverse the membrane as a helical segment.

It localises to the cell inner membrane. Its function is as follows. Toxic component of a type I toxin-antitoxin (TA) system. Expression in the absence of its cognate antitoxin (small sRNA orzO) leads to cell stasis and a decrease in colony-forming units. Repression of ZorO toxicity requires base pairing between zorO mRNA and sRNA OrzO, as well as RNase III (rnc), suggesting the mRNA is degraded. Base pairing occurs between 18 bases in the 5' UTR of zorO mRNA and the 5' end of OrzO sRNA. sRNA OrzP, which differs only in 4 of these 18 bases, does not repress ZorO toxicity. Integration of the protein into the inner membrane damages membrane integrity and affects membrane potential. It leads to increased levels of hydroxyl radicals. This chain is Small toxic protein ZorO, found in Escherichia coli O157:H7.